Here is a 340-residue protein sequence, read N- to C-terminus: Cobalt-precorrin-5B C(1)-methyltransferase (340 aa).

The protein belongs to the CbiD family.

The enzyme catalyses Co-precorrin-5B + S-adenosyl-L-methionine = Co-precorrin-6A + S-adenosyl-L-homocysteine. The protein operates within cofactor biosynthesis; adenosylcobalamin biosynthesis; cob(II)yrinate a,c-diamide from sirohydrochlorin (anaerobic route): step 6/10. Its function is as follows. Catalyzes the methylation of C-1 in cobalt-precorrin-5B to form cobalt-precorrin-6A. The protein is Cobalt-precorrin-5B C(1)-methyltransferase of Pyrobaculum aerophilum (strain ATCC 51768 / DSM 7523 / JCM 9630 / CIP 104966 / NBRC 100827 / IM2).